The chain runs to 140 residues: Arsenate reductase ArsI2 (140 aa).

Catalysis depends on Cys-10, which acts as the Nucleophile; cysteine thioarsenate intermediate.

The protein belongs to the ArsC family.

It catalyses the reaction [glutaredoxin]-dithiol + arsenate + glutathione + H(+) = glutathionyl-S-S-[glutaredoxin] + arsenite + H2O. Functionally, catalyzes the reduction of arsenate [As(V)] to arsenite [As(III)]. Does not constitute the major arsenate reductase in cells: essential only in the absence of ArsC (AC P74313). This is Arsenate reductase ArsI2 from Synechocystis sp. (strain ATCC 27184 / PCC 6803 / Kazusa).